We begin with the raw amino-acid sequence, 208 residues long: Calcyphosin-like protein (208 aa).

4 consecutive EF-hand domains span residues 39 to 74 (AGIK…YAVV), 75 to 110 (MEKE…PMSR), 111 to 146 (ARKE…KHHP), and 154 to 191 (SEEQ…VSAS). Ca(2+)-binding residues include D52, D54, N56, T58, E63, D88, D90, N92, T94, and E99.

The protein localises to the cytoplasm. This Homo sapiens (Human) protein is Calcyphosin-like protein (CAPSL).